A 206-amino-acid chain; its full sequence is Probable GTP-binding protein EngB (206 aa).

Residues 23–195 enclose the EngB-type G domain; the sequence is DLLEIAFVGR…WARIEAIMAE (173 aa). Residues 31–38, 58–62, 76–79, 143–146, and 174–176 each bind GTP; these read GRSNVGKS, GRTQL, DLPG, TKCD, and FSA. 2 residues coordinate Mg(2+): S38 and T60.

It belongs to the TRAFAC class TrmE-Era-EngA-EngB-Septin-like GTPase superfamily. EngB GTPase family. It depends on Mg(2+) as a cofactor.

Necessary for normal cell division and for the maintenance of normal septation. The polypeptide is Probable GTP-binding protein EngB (Geobacter sulfurreducens (strain ATCC 51573 / DSM 12127 / PCA)).